Reading from the N-terminus, the 632-residue chain is POU domain, class 2, transcription factor 1 (632 aa).

Residues T157 and T163 each carry the phosphothreonine modification. The region spanning 167 to 241 (EEPSDLEELE…LLEKWLNDAE (75 aa)) is the POU-specific domain. S170 is subject to Phosphoserine. Residues 243–258 (LSSDSTASSPSALNSP) show a composition bias toward low complexity. The tract at residues 243–273 (LSSDSTASSPSALNSPGLGAEGLNRRRKKRT) is disordered. The homeobox DNA-binding region spans 268 to 327 (RRKKRTSIETNIRVALEKSFMENQKPTSEDITLIAEQLNMEKEVIRVWFCNRRQKEKRIN). Phosphoserine is present on residues S274 and S337. Residues 385–448 (GTTDSTSNNT…STPLPSPLGA (64 aa)) are disordered. Residues 394 to 441 (TATVISTAPPASSAVTSPSLSPSPSASASTSEASSASETSTTQTTSTP) are compositionally biased toward low complexity.

It belongs to the POU transcription factor family. Class-2 subfamily. As to quaternary structure, interacts with POU2AF1; the interaction increases POU2F1 transactivation activity. Interacts with NR3C1, AR, PGR and HCFC1. In terms of processing, phosphorylated by PRKDC. In terms of tissue distribution, widely expressed.

It localises to the nucleus. Transcription factor that binds to the octamer motif (5'-ATTTGCAT-3') and activates the promoters of the genes for some small nuclear RNAs (snRNA) and of genes such as those for histone H2B and immunoglobulins. Modulates transcription transactivation by NR3C1, AR and PGR. This is POU domain, class 2, transcription factor 1 (Pou2f1) from Rattus norvegicus (Rat).